A 350-amino-acid polypeptide reads, in one-letter code: Protein RecA (350 aa).

80 to 87 (GPESSGKT) provides a ligand contact to ATP.

It belongs to the RecA family.

It localises to the cytoplasm. Its function is as follows. Can catalyze the hydrolysis of ATP in the presence of single-stranded DNA, the ATP-dependent uptake of single-stranded DNA by duplex DNA, and the ATP-dependent hybridization of homologous single-stranded DNAs. It interacts with LexA causing its activation and leading to its autocatalytic cleavage. In Chlorobium limicola (strain DSM 245 / NBRC 103803 / 6330), this protein is Protein RecA.